An 86-amino-acid chain; its full sequence is uncharacterized protein (86 aa).

It to M.jannaschii MJ0526.1.

This is an uncharacterized protein from Methanothermobacter thermautotrophicus (strain ATCC 29096 / DSM 1053 / JCM 10044 / NBRC 100330 / Delta H) (Methanobacterium thermoautotrophicum).